Consider the following 172-residue polypeptide: Adenine phosphoribosyltransferase (172 aa).

Belongs to the purine/pyrimidine phosphoribosyltransferase family. Homodimer.

The protein localises to the cytoplasm. It catalyses the reaction AMP + diphosphate = 5-phospho-alpha-D-ribose 1-diphosphate + adenine. The protein operates within purine metabolism; AMP biosynthesis via salvage pathway; AMP from adenine: step 1/1. In terms of biological role, catalyzes a salvage reaction resulting in the formation of AMP, that is energically less costly than de novo synthesis. This is Adenine phosphoribosyltransferase from Latilactobacillus sakei subsp. sakei (strain 23K) (Lactobacillus sakei subsp. sakei).